The following is a 154-amino-acid chain: Egg-lysin (154 aa).

The N-terminal stretch at 1–18 (MKLFVLCIFAMMATLAMS) is a signal peptide.

As to quaternary structure, homodimer. Sperm.

Functionally, dissolves the egg vitelline layer nonenzymatically during fertilization. It creates a hole of about 3 mu-m in diameter through which the sperm pass. The sequence is that of Egg-lysin from Haliotis kamtschatkana (Pinto abalone).